A 305-amino-acid polypeptide reads, in one-letter code: MSLEKDEEVVIFEAYLAGSANIFKNLIELLSQVAPIKKSDNSNKSIKQAFFKITKNGIYINIDHQSDILINISLDADKFGSYKYNFSLPELHIGITLDIIKDALKNVKKSEGVALCIRKKTFQTMPNEMSFSISSMDNNNASRGFVVKFNIVQNININAMLDGQELIEMRSNQFLGLCKDMGGSKKQIKVIVHNDSVVFSCNMVDIATKWLSFPIEEEVFQSSIHEKLYFLNHFKSEHIKTITKLATFDDTIKMSCVDDSIVFKSYITRCTPTKARHLPTEYIGKINIWVKAEPKKEISDDEDDL.

The protein belongs to the IIV-6 436R family.

This is an uncharacterized protein from Acheta domesticus (House cricket).